Here is a 657-residue protein sequence, read N- to C-terminus: Probable cytochrome P450 556A1 (657 aa).

The chain crosses the membrane as a helical span at residues 2–24 (FLTSILYTIIIILIFYKGLEYLI). Residues 440–486 (RSLPSINNNNNNNNNNNNNNNNNNNNNNNNNSNNNSINGNNKNNNRN) form a disordered region. Residues 446–486 (NNNNNNNNNNNNNNNNNNNNNNNNNSNNNSINGNNKNNNRN) are compositionally biased toward low complexity. Cys587 provides a ligand contact to heme.

Belongs to the cytochrome P450 family. Heme serves as cofactor.

The protein resides in the membrane. This chain is Probable cytochrome P450 556A1 (cyp556A1), found in Dictyostelium discoideum (Social amoeba).